Reading from the N-terminus, the 88-residue chain is Toxin ICK-12 (88 aa).

The first 19 residues, 1 to 19 (MKSIVYMLLFCTFTVVILG), serve as a signal peptide directing secretion. 4 disulfides stabilise this stretch: cysteine 41–cysteine 55, cysteine 41–cysteine 78, cysteine 54–cysteine 67, and cysteine 81–cysteine 88.

It belongs to the neurotoxin 27 (Jztx-72) family. ICK-41 subfamily. In terms of tissue distribution, expressed by the venom gland.

The protein localises to the secreted. Its function is as follows. Probable neurotoxin with ion channel impairing activity. This Trittame loki (Brush-footed trapdoor spider) protein is Toxin ICK-12.